A 304-amino-acid chain; its full sequence is Aspartate carbamoyltransferase catalytic subunit (304 aa).

Residues Arg-49 and Thr-50 each contribute to the carbamoyl phosphate site. Residue Lys-77 participates in L-aspartate binding. Carbamoyl phosphate-binding residues include Arg-99, His-127, and Gln-130. L-aspartate contacts are provided by Arg-160 and Arg-211. Carbamoyl phosphate-binding residues include Ala-252 and Pro-253.

This sequence belongs to the aspartate/ornithine carbamoyltransferase superfamily. ATCase family. As to quaternary structure, heterododecamer (2C3:3R2) of six catalytic PyrB chains organized as two trimers (C3), and six regulatory PyrI chains organized as three dimers (R2).

It catalyses the reaction carbamoyl phosphate + L-aspartate = N-carbamoyl-L-aspartate + phosphate + H(+). The protein operates within pyrimidine metabolism; UMP biosynthesis via de novo pathway; (S)-dihydroorotate from bicarbonate: step 2/3. Catalyzes the condensation of carbamoyl phosphate and aspartate to form carbamoyl aspartate and inorganic phosphate, the committed step in the de novo pyrimidine nucleotide biosynthesis pathway. The chain is Aspartate carbamoyltransferase catalytic subunit from Bacillus cereus (strain ZK / E33L).